The following is a 407-amino-acid chain: S-adenosylmethionine synthase (407 aa).

An ATP-binding site is contributed by His15. Residue Asp17 coordinates Mg(2+). K(+) is bound at residue Glu43. Residues Glu56 and Gln100 each coordinate L-methionine. The tract at residues 100–110 (QSPDIAQGVDE) is flexible loop. Residues 171 to 173 (DGK), 248 to 249 (KF), Asp257, 263 to 264 (RK), Ala280, and Lys284 contribute to the ATP site. Asp257 is a binding site for L-methionine. Lys288 is an L-methionine binding site.

Belongs to the AdoMet synthase family. Homotetramer; dimer of dimers. Requires Mg(2+) as cofactor. The cofactor is K(+).

It is found in the cytoplasm. The catalysed reaction is L-methionine + ATP + H2O = S-adenosyl-L-methionine + phosphate + diphosphate. It functions in the pathway amino-acid biosynthesis; S-adenosyl-L-methionine biosynthesis; S-adenosyl-L-methionine from L-methionine: step 1/1. Functionally, catalyzes the formation of S-adenosylmethionine (AdoMet) from methionine and ATP. The overall synthetic reaction is composed of two sequential steps, AdoMet formation and the subsequent tripolyphosphate hydrolysis which occurs prior to release of AdoMet from the enzyme. The sequence is that of S-adenosylmethionine synthase from Synechococcus sp. (strain RCC307).